A 316-amino-acid polypeptide reads, in one-letter code: Cytochrome c biogenesis protein CcsA (316 aa).

The next 7 helical transmembrane spans lie at 15–35 (FSICSIVITIRLINLVVTTIL), 44–64 (GIITTFLCLTGFLVTRWIYSG), 71–91 (LYESLIFLSWSFSLIHIVAYL), 142–162 (MILSYAALLCGSLLSAALLVI), 220–240 (VISLGFIFLTMGILSGAVWAN), 247–267 (WSWDPKETWAFITWIIFAIYL), and 281–301 (AIVAVIGFLIIWICYFGVNLL).

The protein belongs to the CcmF/CycK/Ccl1/NrfE/CcsA family. May interact with Ccs1.

Its subcellular location is the plastid. The protein localises to the chloroplast thylakoid membrane. In terms of biological role, required during biogenesis of c-type cytochromes (cytochrome c6 and cytochrome f) at the step of heme attachment. The protein is Cytochrome c biogenesis protein CcsA of Trachelium caeruleum (Blue throatwort).